Reading from the N-terminus, the 127-residue chain is MNYINKVMLVGRCGQEPDLKFFESGAVKASISIAVRPPYRSEQALWFDLVAWGNQAEVIGNYVRKGTQIAITGEFGFDRWADKNSGTMRQKPVITINTIELLGSPRKEESTSTSAPNETQAVANANF.

One can recognise an SSB domain in the interval 4-103; sequence INKVMLVGRC…ITINTIELLG (100 aa). Positions 104–127 are disordered; the sequence is SPRKEESTSTSAPNETQAVANANF. The span at 111-127 shows a compositional bias: polar residues; the sequence is TSTSAPNETQAVANANF.

As to quaternary structure, homotetramer.

In Nostoc sp. (strain PCC 7120 / SAG 25.82 / UTEX 2576), this protein is Single-stranded DNA-binding protein 2 (ssb2).